The sequence spans 144 residues: Large ribosomal subunit protein uL15 (144 aa).

The interval 1–56 is disordered; that stretch reads MELNNLKPAAGAKHAKRRVGRGIGSGLGKTAGRGHKGQKSRSGGFHKVGFEGGQMP. Residues 21 to 31 show a composition bias toward gly residues; the sequence is RGIGSGLGKTA.

This sequence belongs to the universal ribosomal protein uL15 family. As to quaternary structure, part of the 50S ribosomal subunit.

Its function is as follows. Binds to the 23S rRNA. This is Large ribosomal subunit protein uL15 from Burkholderia multivorans (strain ATCC 17616 / 249).